Here is a 417-residue protein sequence, read N- to C-terminus: UDP-N-acetylglucosamine 1-carboxyvinyltransferase (417 aa).

22–23 (KN) is a phosphoenolpyruvate binding site. Arg93 provides a ligand contact to UDP-N-acetyl-alpha-D-glucosamine. Cys117 functions as the Proton donor in the catalytic mechanism. Position 117 is a 2-(S-cysteinyl)pyruvic acid O-phosphothioketal (Cys117). 2 residues coordinate UDP-N-acetyl-alpha-D-glucosamine: Asp304 and Ile326.

The protein belongs to the EPSP synthase family. MurA subfamily.

It localises to the cytoplasm. It carries out the reaction phosphoenolpyruvate + UDP-N-acetyl-alpha-D-glucosamine = UDP-N-acetyl-3-O-(1-carboxyvinyl)-alpha-D-glucosamine + phosphate. It participates in cell wall biogenesis; peptidoglycan biosynthesis. In terms of biological role, cell wall formation. Adds enolpyruvyl to UDP-N-acetylglucosamine. The polypeptide is UDP-N-acetylglucosamine 1-carboxyvinyltransferase (Neisseria gonorrhoeae (strain ATCC 700825 / FA 1090)).